The primary structure comprises 619 residues: ATP-dependent RNA helicase DBP8 (619 aa).

Residues 1 to 149 form a disordered region; the sequence is MAVSKKSRKS…NGLPSASKPS (149 aa). A compositionally biased stretch (acidic residues) spans 46-67; it reads EGNDESDEEDDDVSNEGEDEGE. The span at 68–78 shows a compositional bias: low complexity; sequence SSGSEAESSVA. A compositionally biased stretch (acidic residues) spans 93–105; that stretch reads LDAEGEEDKENEE. Residues 137–147 show a composition bias toward polar residues; it reads PQPNGLPSASK. Residues 152–180 carry the Q motif motif; that stretch reads VTFESLGLSRPLITALASINIKKPTEIQA. The Helicase ATP-binding domain maps to 183–356; that stretch reads VEPILSGRDC…NKEPPAGKQR (174 aa). Residue 196–203 participates in ATP binding; it reads AKTGSGKT. A DEAD box motif is present at residues 304–307; the sequence is DEAD. The segment at 414-436 is disordered; it reads EREAALGKKGKKPKQAKEEEDAP. The region spanning 430–572 is the Helicase C-terminal domain; that stretch reads KEEEDAPSVP…ELKLDEDKVL (143 aa).

It belongs to the DEAD box helicase family. DDX49/DBP8 subfamily.

The protein localises to the nucleus. The protein resides in the nucleolus. It catalyses the reaction ATP + H2O = ADP + phosphate + H(+). Functionally, ATP-binding RNA helicase involved in 40S ribosomal subunit biogenesis and is required for the normal formation of 18S rRNAs through pre-rRNA processing at A0, A1 and A2 sites. Required for vegetative growth. In Cryptococcus neoformans var. neoformans serotype D (strain B-3501A) (Filobasidiella neoformans), this protein is ATP-dependent RNA helicase DBP8 (DBP8).